We begin with the raw amino-acid sequence, 178 residues long: Disulfide bond formation protein B (178 aa).

Residues Met1–Ala14 are Cytoplasmic-facing. Residues Trp15–Tyr31 traverse the membrane as a helical segment. Residues Phe32 to Val49 are Periplasmic-facing. Cysteines 41 and 44 form a disulfide. A helical membrane pass occupies residues Ala50 to Pro65. Residues Ser66–Leu72 are Cytoplasmic-facing. Residues Val73–Ile90 form a helical membrane-spanning segment. At Thr91–Gln145 the chain is on the periplasmic side. A disulfide bond links Cys105 and Cys131. Residues Trp146 to Ser164 traverse the membrane as a helical segment. At Gln165–Phe177 the chain is on the cytoplasmic side.

It belongs to the DsbB family.

It localises to the cell inner membrane. Its function is as follows. Required for disulfide bond formation in some periplasmic proteins. Acts by oxidizing the DsbA protein. This chain is Disulfide bond formation protein B, found in Pasteurella multocida (strain Pm70).